We begin with the raw amino-acid sequence, 194 residues long: 7-methyl-GTP pyrophosphatase (194 aa).

The active-site Proton acceptor is the D70.

Belongs to the Maf family. YceF subfamily. Requires a divalent metal cation as cofactor.

It is found in the cytoplasm. The enzyme catalyses N(7)-methyl-GTP + H2O = N(7)-methyl-GMP + diphosphate + H(+). Nucleoside triphosphate pyrophosphatase that hydrolyzes 7-methyl-GTP (m(7)GTP). May have a dual role in cell division arrest and in preventing the incorporation of modified nucleotides into cellular nucleic acids. The protein is 7-methyl-GTP pyrophosphatase of Ralstonia nicotianae (strain ATCC BAA-1114 / GMI1000) (Ralstonia solanacearum).